The primary structure comprises 219 residues: Alpha N-terminal protein methyltransferase 1 (219 aa).

S-adenosyl-L-methionine is bound by residues Gly-64, Arg-69, 111–112, and Gln-127; that span reads LQ.

This sequence belongs to the methyltransferase superfamily. NTM1 family.

The protein localises to the cytoplasm. The enzyme catalyses N-terminal L-alanyl-L-prolyl-L-lysyl-[protein] + 3 S-adenosyl-L-methionine = N-terminal N,N,N-trimethyl-L-alanyl-L-prolyl-L-lysyl-[protein] + 3 S-adenosyl-L-homocysteine + 3 H(+). It carries out the reaction N-terminal L-seryl-L-prolyl-L-lysyl-[protein] + 3 S-adenosyl-L-methionine = N-terminal N,N,N-trimethyl-L-seryl-L-prolyl-L-lysyl-[protein] + 3 S-adenosyl-L-homocysteine + 3 H(+). The catalysed reaction is N-terminal L-prolyl-L-prolyl-L-lysyl-[protein] + 2 S-adenosyl-L-methionine = N-terminal N,N-dimethyl-L-prolyl-L-prolyl-L-lysyl-[protein] + 2 S-adenosyl-L-homocysteine + 2 H(+). In terms of biological role, alpha-N-methyltransferase that methylates the N-terminus of target proteins containing the N-terminal motif [Ala/Pro/Ser]-Pro-Lys when the initiator Met is cleaved. Specifically catalyzes mono-, di- or tri-methylation of exposed alpha-amino group of Ala or Ser residue in the [Ala/Ser]-Pro-Lys motif and mono- or di-methylation of Pro in the Pro-Pro-Lys motif. This chain is Alpha N-terminal protein methyltransferase 1 (tae1), found in Schizosaccharomyces pombe (strain 972 / ATCC 24843) (Fission yeast).